The primary structure comprises 372 residues: E3 ubiquitin-protein ligase RNF34 (372 aa).

An FYVE-type zinc finger spans residues 56–107 (EGPNIVCKACGLSFSVFRKKHVCCDCKKDFCSVCSVLQENLRRCSTCHLLQE). The SAP 1 domain occupies 115 to 134 (LMRLKVKDLRQYLILRNIPT). Residue Ser-169 is modified to Phosphoserine. The disordered stretch occupies residues 194–252 (QGELMDGDQTSRSGVPAQVQSEITSANTEDDDDDDDEDDDDEEENAEDQNPGLSKERVR). The span at 201–220 (DQTSRSGVPAQVQSEITSAN) shows a compositional bias: polar residues. The span at 221 to 240 (TEDDDDDDDEDDDDEEENAE) shows a compositional bias: acidic residues. Phosphoserine occurs at positions 254 and 256. The SAP 2 domain occupies 264-278 (VEGMSVRQLKEILAR). Residues 325-360 (CRICMDAVIDCVLLECGHMVTCTKCGKRMSECPICR) form an RING-type zinc finger.

In terms of assembly, interacts with CASP8 and CASP10. Interacts with p53/TP53; involved in p53/TP53 ubiquitination. Interacts (via RING-type zinc finger) with MDM2; the interaction stabilizes MDM2. Interacts (via RING-type zinc finger) with PPARGC1A. Interacts with NOD1. Post-translationally, autoubiquitinated (in vitro). Proteolytically cleaved by caspases upon induction of apoptosis by TNF.

It is found in the cell membrane. The protein localises to the endomembrane system. The protein resides in the nucleus. It localises to the nucleus speckle. Its subcellular location is the cytoplasm. It is found in the cytosol. The catalysed reaction is S-ubiquitinyl-[E2 ubiquitin-conjugating enzyme]-L-cysteine + [acceptor protein]-L-lysine = [E2 ubiquitin-conjugating enzyme]-L-cysteine + N(6)-ubiquitinyl-[acceptor protein]-L-lysine.. It functions in the pathway protein modification; protein ubiquitination. E3 ubiquitin-protein ligase that regulates several biological processes through the ubiquitin-mediated proteasomal degradation of various target proteins. Ubiquitinates the caspases CASP8 and CASP10, promoting their proteasomal degradation, to negatively regulate cell death downstream of death domain receptors in the extrinsic pathway of apoptosis. May mediate 'Lys-48'-linked polyubiquitination of RIPK1 and its subsequent proteasomal degradation thereby indirectly regulating the tumor necrosis factor-mediated signaling pathway. Negatively regulates p53/TP53 through its direct ubiquitination and targeting to proteasomal degradation. Indirectly, may also negatively regulate p53/TP53 through ubiquitination and degradation of SFN. Mediates PPARGC1A proteasomal degradation probably through ubiquitination thereby indirectly regulating the metabolism of brown fat cells. Possibly involved in innate immunity, through 'Lys-48'-linked polyubiquitination of NOD1 and its subsequent proteasomal degradation. The sequence is that of E3 ubiquitin-protein ligase RNF34 (RNF34) from Pongo abelii (Sumatran orangutan).